Consider the following 1088-residue polypeptide: Protocadherin-19 (1088 aa).

The first 24 residues, 1 to 24, serve as a signal peptide directing secretion; it reads MHSKDMDFVQMFVCFLLCWTGVDA. The Extracellular segment spans residues 25–678; the sequence is VFNLKYTVEE…QEQIGPVNLS (654 aa). Cadherin domains are found at residues 31–130, 131–239, 240–347, 351–454, 455–563, and 569–676; these read TVEE…APRF, PTNH…NPVF, DEPV…APEI, SENS…PPYF, TKPH…TPVM, and VNGT…GPVN. Ca(2+) is bound by residues E34 and E35. N44 is a glycosylation site (N-linked (GlcNAc...) asparagine). Residues D89 and D91 each coordinate Ca(2+). C94 and C100 are joined by a disulfide. 17 residues coordinate Ca(2+): D122, V123, N124, D125, N126, E141, D156, D158, N162, E200, D213, D231, S232, N233, D234, N235, and E250. A glycan (N-linked (GlcNAc...) asparagine) is linked at N262. Residues D265, D267, and N271 each contribute to the Ca(2+) site. N-linked (GlcNAc...) asparagine glycosylation is present at N284. Ca(2+) contacts are provided by D306, E308, D339, I340, N341, D342, N343, E361, and D376. N-linked (GlcNAc...) asparagine glycosylation is present at N377. Ca(2+) is bound by residues D378, N382, D413, and E415. N-linked (GlcNAc...) asparagine glycosylation occurs at N421. 13 residues coordinate Ca(2+): D428, D446, E447, N448, D449, N450, E465, D480, D482, N486, N522, E524, and D537. N486 is a glycosylation site (N-linked (GlcNAc...) asparagine). The N-linked (GlcNAc...) asparagine glycan is linked to N546. Ca(2+) contacts are provided by D555, V556, N557, D558, and N559. N570 carries an N-linked (GlcNAc...) asparagine glycan. Ca(2+)-binding residues include D594, D596, N600, and D646. N676 carries N-linked (GlcNAc...) asparagine glycosylation. Residues 679–699 traverse the membrane as a helical segment; it reads LIFIIALGSIAVILFVTMIFV. Topologically, residues 700 to 1088 are cytoplasmic; sequence AVKCKRDNKE…GSKRLKDIVL (389 aa). Disordered regions lie at residues 792–813, 851–875, 970–1032, and 1067–1088; these read NSRN…GPQQ, DMEG…HDVQ, TFGK…ASST, and TLLQ…DIVL. A compositionally biased stretch (basic and acidic residues) spans 859-875; that stretch reads DSGHEESDQTDSEHDVQ. The span at 1071-1088 shows a compositional bias: basic and acidic residues; sequence DGRDKESPGSKRLKDIVL.

As to quaternary structure, homodimer; antiparallel. Interacts with cadherin cdh2; the interaction confers robust cell adhesion activity on pcdh19. As to expression, in the embryo, strongly expressed in the developing nervous system. At 12 hours post fertilization (hpf), shows a segmental expression pattern in the anterior third of the neural keel with strong expression in the presumptive forebrain, cerebellum/rhombomere 1 and rhombomere 4. By 24 hpf, expressed widely in the brain and spinal cord with higher expression levels in the ventral telencephalon, dorsal and central thalamus, optic tectum, central tegmentum, cerebellum and dorsolateral regions of the hindbrain. As development proceeds, expression becomes restricted to the dorsal and/or lateral regions of the central nervous system. Not detected in the spinal cord of two- and three-day old embryos. Expressed in the eye primordium, developing retina, lens and otic vesicle. Expressed in the larval optic tectum at 4 days post-fertilization where it localizes in discrete columns of neurons. Expressed throughout the adult brain with strong expression in the ventromedial telencephalon, periventricular regions of the thalamus and anterior hypothalamus, stratum periventriculare of the optic tectum, dorsal tegmental nucleus, granular regions of the cerebellar body and valvula, and superficial layers of the facial and vagal lobes.

It is found in the cell membrane. Calcium-dependent cell-adhesion protein. Essential for the early stages of neurulation in the anterior neural plate. Shows little cell adhesion activity on its own but exhibits robust homophilic cell adhesion when in a complex with cadherin cdh2 and appears to mediate the adhesion while cdh2 acts as a cell adhesion cofactor in the complex. Functions with cdh2 to coordinate cell adhesion and cell movements during neurulation. Contributes to neural progenitor cell patterning with cdh2 by promoting homophilic cell interactions. Regulates the columnar organization of neurons in the optic tectum. The protein is Protocadherin-19 of Danio rerio (Zebrafish).